The sequence spans 320 residues: AA9 family lytic polysaccharide monooxygenase-like protein CEL1 (320 aa).

The N-terminal stretch at 1 to 29 (MRLPSRQQVLKMLATFSLALGLFAAKVQA) is a signal peptide. Intrachain disulfides connect cysteine 78-cysteine 199 and cysteine 121-cysteine 126. Histidine 109 provides a ligand contact to Cu(2+). N-linked (GlcNAc...) asparagine glycosylation is present at asparagine 163. 2 residues coordinate O2: histidine 189 and glutamine 194. Residue tyrosine 196 coordinates Cu(2+). The interval 255–284 (GSGGNGGSPTTTPHTTTPITTSPPPTSTPG) is disordered. The segment covering 262–274 (SPTTTPHTTTPIT) has biased composition (low complexity). One can recognise a CBM1 domain in the interval 284-320 (GTIPQYGQCGGIGWTGGTGCVAPYQCKVINDYYSQCL).

This sequence belongs to the polysaccharide monooxygenase AA9 family. Requires Cu(2+) as cofactor.

The protein localises to the secreted. It catalyses the reaction [(1-&gt;4)-beta-D-glucosyl]n+m + reduced acceptor + O2 = 4-dehydro-beta-D-glucosyl-[(1-&gt;4)-beta-D-glucosyl]n-1 + [(1-&gt;4)-beta-D-glucosyl]m + acceptor + H2O.. In terms of biological role, lytic polysaccharide monooxygenase (LPMO)-like protein that binds strongly to cellulose. Seems not to acts as an endoglucanase, a ceUobiohydrolase able to hydrolyze fluorogenic cellobiosides, a /3-glucosidase, a xylanase, nor a cellobiose:quinone oxidoreductase. This is AA9 family lytic polysaccharide monooxygenase-like protein CEL1 from Agaricus bisporus (White button mushroom).